Here is a 309-residue protein sequence, read N- to C-terminus: Homoserine kinase (309 aa).

Proline 88–alanine 98 provides a ligand contact to ATP.

It belongs to the GHMP kinase family. Homoserine kinase subfamily.

Its subcellular location is the cytoplasm. The catalysed reaction is L-homoserine + ATP = O-phospho-L-homoserine + ADP + H(+). It functions in the pathway amino-acid biosynthesis; L-threonine biosynthesis; L-threonine from L-aspartate: step 4/5. In terms of biological role, catalyzes the ATP-dependent phosphorylation of L-homoserine to L-homoserine phosphate. The chain is Homoserine kinase from Halalkalibacterium halodurans (strain ATCC BAA-125 / DSM 18197 / FERM 7344 / JCM 9153 / C-125) (Bacillus halodurans).